The chain runs to 354 residues: Probable L-ascorbate-6-phosphate lactonase UlaG (354 aa).

This sequence belongs to the UlaG family. It depends on a divalent metal cation as a cofactor.

The protein localises to the cytoplasm. The enzyme catalyses L-ascorbate 6-phosphate + H2O = 3-dehydro-L-gulonate 6-phosphate. Its pathway is cofactor degradation; L-ascorbate degradation; D-xylulose 5-phosphate from L-ascorbate: step 1/4. Probably catalyzes the hydrolysis of L-ascorbate-6-P into 3-keto-L-gulonate-6-P. Is essential for L-ascorbate utilization under anaerobic conditions. This chain is Probable L-ascorbate-6-phosphate lactonase UlaG, found in Escherichia coli (strain SMS-3-5 / SECEC).